Reading from the N-terminus, the 204-residue chain is Thymidine kinase (204 aa).

ATP contacts are provided by residues G15 to S22 and D88 to Q91. Catalysis depends on E89, which acts as the Proton acceptor. The Zn(2+) site is built by C145, C148, C183, and C186.

This sequence belongs to the thymidine kinase family. Homotetramer.

The protein localises to the cytoplasm. The enzyme catalyses thymidine + ATP = dTMP + ADP + H(+). This chain is Thymidine kinase, found in Halalkalibacterium halodurans (strain ATCC BAA-125 / DSM 18197 / FERM 7344 / JCM 9153 / C-125) (Bacillus halodurans).